Consider the following 456-residue polypeptide: Phosphomethylpyrimidine synthase (456 aa).

Substrate is bound by residues asparagine 80, methionine 109, tyrosine 139, histidine 175, 195–197, 236–239, and glutamate 275; these read SRG and DSLR. Histidine 279 contacts Zn(2+). Position 302 (tyrosine 302) interacts with substrate. Histidine 343 contributes to the Zn(2+) binding site. [4Fe-4S] cluster is bound by residues cysteine 423, cysteine 426, and cysteine 431.

The protein belongs to the ThiC family. The cofactor is [4Fe-4S] cluster.

It catalyses the reaction 5-amino-1-(5-phospho-beta-D-ribosyl)imidazole + S-adenosyl-L-methionine = 4-amino-2-methyl-5-(phosphooxymethyl)pyrimidine + CO + 5'-deoxyadenosine + formate + L-methionine + 3 H(+). The protein operates within cofactor biosynthesis; thiamine diphosphate biosynthesis. Catalyzes the synthesis of the hydroxymethylpyrimidine phosphate (HMP-P) moiety of thiamine from aminoimidazole ribotide (AIR) in a radical S-adenosyl-L-methionine (SAM)-dependent reaction. This chain is Phosphomethylpyrimidine synthase, found in Synechococcus elongatus (strain ATCC 33912 / PCC 7942 / FACHB-805) (Anacystis nidulans R2).